The primary structure comprises 603 residues: MAKHIVELTDALSNKIAAGEVVERPASVVKELVENAIDAGSTVIDILVEEAGLNKITIIDNGSGIEEEDVATAFLRHATSKIKNEADLFRVHTLGFRGEALPSIASVSHLEMETSTGEAKGTTISLEGGKIIEQKSGHARKGTQIEVSQLFFNTPARLKYLKSLPTELGNITDILNRLALAHPDISFRFSHNGKPLLQTNGNGELRQVIAAIYGVSIAKKSVPVKAESLDFKISGYAVLPEVNRSNRNYISTIINGRFIKNFALVKAIQEGYHTLLPIGRFPIIVLQIEMDPIIVDVNVHPAKLEVRLSKEKELGQLISQMIKETFHKLQLIPDGEISKKQKEDQKSEQIQMSFEENKPVKETPTLFSKPTIPEYVPSDEDAPREDDFILETMPSYEPESQAEQEEHTKERIPKMYPIGQMHATYIFAQNENGLYIIDQHAAQERIKYEFYREKIGEVSRELQELLVPIVLEFPADEYVRLEEQKAKLEEVGVFLENFGQNSFIIRAHPTWFPKDQEEEMLREIIDEALSAPSISIHKLREDTAIMMSCKKSIKANHYLTTQDMEALLDTLREASDPFTCPHGRPVIIQYSTYELEKMFKRVM.

Over residues 337-347 (ISKKQKEDQKS) the composition is skewed to basic and acidic residues. The interval 337-383 (ISKKQKEDQKSEQIQMSFEENKPVKETPTLFSKPTIPEYVPSDEDAP) is disordered.

Belongs to the DNA mismatch repair MutL/HexB family.

This protein is involved in the repair of mismatches in DNA. It is required for dam-dependent methyl-directed DNA mismatch repair. May act as a 'molecular matchmaker', a protein that promotes the formation of a stable complex between two or more DNA-binding proteins in an ATP-dependent manner without itself being part of a final effector complex. The sequence is that of DNA mismatch repair protein MutL from Listeria monocytogenes serotype 4b (strain F2365).